We begin with the raw amino-acid sequence, 473 residues long: MSQGTLYDKVWDQHKVTTLPNGQDQLFVGLHLIHEVTSPQAFGMIKERGLEVARPDLTHATVDHIVPTANQDRPYSDDAAETMMAELEENVRDAGIQFSDPTTGDQGIVHVIGPEQGITQPGKTIVCGDSHTSTHGAFGALAFGIGTSQIRDVLATQTIAMEKQKVRKIEVTGELDEGVEAKDIILEIIRRLGTEGGVGYVYEYAGETIENLDMEGRMSICNMSIEGGARAGYVNPDETTYEWLEETDYFQEHPEKFEELKPYWESIRSDEDAEYDDVVEIDAGELDPVVTWGTTPGQGIGIDDPIPEPEDLADDKVDTARRAQKHMRVEPGETMEGYDIDVAFLGSCTNARLPDLRRAARIVKGREVADDVRAFVVPGSQRVQRAAEEEGLKDIFEEAGFEWRNAGCSMCLGMNEDQLEGDEACASSSNRNFVGRQGSKDGRTVLMNPRMVAAAAITGEVSDVRDLKEVTLA.

Positions 348, 408, and 411 each coordinate [4Fe-4S] cluster.

It belongs to the aconitase/IPM isomerase family. LeuC type 1 subfamily. As to quaternary structure, heterodimer of LeuC and LeuD. [4Fe-4S] cluster is required as a cofactor.

The catalysed reaction is (2R,3S)-3-isopropylmalate = (2S)-2-isopropylmalate. The protein operates within amino-acid biosynthesis; L-leucine biosynthesis; L-leucine from 3-methyl-2-oxobutanoate: step 2/4. Catalyzes the isomerization between 2-isopropylmalate and 3-isopropylmalate, via the formation of 2-isopropylmaleate. The sequence is that of 3-isopropylmalate dehydratase large subunit from Haloarcula marismortui (strain ATCC 43049 / DSM 3752 / JCM 8966 / VKM B-1809) (Halobacterium marismortui).